Here is a 111-residue protein sequence, read N- to C-terminus: Nucleoid-associated protein CT0805 (111 aa).

It belongs to the YbaB/EbfC family. In terms of assembly, homodimer.

It localises to the cytoplasm. It is found in the nucleoid. Binds to DNA and alters its conformation. May be involved in regulation of gene expression, nucleoid organization and DNA protection. This chain is Nucleoid-associated protein CT0805, found in Chlorobaculum tepidum (strain ATCC 49652 / DSM 12025 / NBRC 103806 / TLS) (Chlorobium tepidum).